The sequence spans 96 residues: MRTLVILAAILLVALQAQAEPLQARTDEATAAQEQIPTDNPEVVVSLAWDESLAPKDSVPGLRKNMACYCRIPACLAGERRYGTCFYLGRVWAFCC.

A signal peptide spans 1 to 19 (MRTLVILAAILLVALQAQA). Residues 20–66 (EPLQARTDEATAAQEQIPTDNPEVVVSLAWDESLAPKDSVPGLRKNM) constitute a propeptide that is removed on maturation. Cystine bridges form between Cys-68–Cys-96, Cys-70–Cys-85, and Cys-75–Cys-95. At Tyr-87 the chain carries Phosphotyrosine.

Tetramer. Dimer. Interacts with RETN. In terms of processing, ADP-ribosylation drastically reduces cytotoxic and antibacterial activities, and enhances IL8 production.

The protein localises to the secreted. Effector molecule of the innate immune system that acts via antibiotic-like properties against a broad array of infectious agents including bacteria, fungi, and viruses or by promoting the activation and maturation of some APCs. Interacts with the essential precursor of cell wall synthesis lipid II to inhibit bacterial cell wall synthesis. Inhibits adenovirus infection via inhibition of viral disassembly at the vertex region, thereby restricting the release of internal capsid protein pVI, which is required for endosomal membrane penetration during cell entry. In addition, interaction with adenovirus capsid leads to the redirection of viral particles to TLR4 thereby promoting a NLRP3-mediated inflammasome response and interleukin 1-beta (IL-1beta) release. Induces the production of proinflammatory cytokines including type I interferon (IFN) in plasmacytoid dendritic cells (pDCs) by triggering the degradation of NFKBIA and nuclear translocation of IRF1, both of which are required for activation of pDCs. This Macaca mulatta (Rhesus macaque) protein is Neutrophil defensin 1.